Reading from the N-terminus, the 392-residue chain is Alanine--glyoxylate aminotransferase (392 aa).

At Lys209 the chain carries N6-(pyridoxal phosphate)lysine. The residue at position 225 (Lys225) is an N6-acetyllysine; alternate. Residue Lys225 is modified to N6-succinyllysine; alternate. N6-acetyllysine occurs at positions 234 and 312. A substrate-binding site is contributed by Arg360. The short motif at 390-392 (SQL) is the Microbody targeting signal element.

It belongs to the class-V pyridoxal-phosphate-dependent aminotransferase family. Homodimer. Pyridoxal 5'-phosphate serves as cofactor.

It is found in the peroxisome. It carries out the reaction L-serine + pyruvate = 3-hydroxypyruvate + L-alanine. The catalysed reaction is glyoxylate + L-alanine = glycine + pyruvate. Functionally, peroxisomal aminotransferase that catalyzes the transamination of glyoxylate to glycine and contributes to the glyoxylate detoxification. Also catalyzes the transamination between L-serine and pyruvate and contributes to gluconeogenesis from the L-serine metabolism. This is Alanine--glyoxylate aminotransferase from Oryctolagus cuniculus (Rabbit).